Consider the following 70-residue polypeptide: Large ribosomal subunit protein bL31 (70 aa).

Residues C16, C18, C37, and C40 each coordinate Zn(2+).

It belongs to the bacterial ribosomal protein bL31 family. Type A subfamily. In terms of assembly, part of the 50S ribosomal subunit. It depends on Zn(2+) as a cofactor.

Binds the 23S rRNA. The polypeptide is Large ribosomal subunit protein bL31 (Psychromonas ingrahamii (strain DSM 17664 / CCUG 51855 / 37)).